The following is a 613-amino-acid chain: Probable hydrolase clz13 (613 aa).

A signal peptide spans 1-25 (MCLLSMRFTVAILLVLLSHCGGSHA). 7 N-linked (GlcNAc...) asparagine glycosylation sites follow: asparagine 61, asparagine 89, asparagine 286, asparagine 422, asparagine 456, asparagine 477, and asparagine 581.

Belongs to the beta-lactamase family.

It participates in secondary metabolite biosynthesis. Probable hydrolase; part of the gene cluster that mediates the biosynthesis of squalestatin S1 (SQS1, also known as zaragozic acid A), a heavily oxidized fungal polyketide that offers potent cholesterol lowering activity by targeting squalene synthase (SS). SQS1 is composed of a 2,8-dioxobicyclic[3.2.1]octane-3,4,5-tricarboxyclic acid core that is connected to two lipophilic polyketide arms. These initial steps feature the priming of an unusual benzoic acid starter unit onto the highly reducing polyketide synthase clz14, followed by oxaloacetate extension and product release to generate a tricarboxylic acid containing product. The phenylalanine ammonia lyase (PAL) clz10 and the acyl-CoA ligase clz12 are involved in transforming phenylalanine into benzoyl-CoA. The citrate synthase-like protein clz17 is involved in connecting the C-alpha-carbons of the hexaketide chain and oxaloacetate to afford the tricarboxylic acid unit. The potential hydrolytic enzymes, clz11 and clz13, are in close proximity to pks2 and may participate in product release. On the other side, the tetraketide arm is synthesized by a the squalestatin tetraketide synthase clz2 and enzymatically esterified to the core in the last biosynthetic step, by the acetyltransferase clz6. The biosynthesis of the tetraketide must involve 3 rounds of chain extension. After the first and second rounds methyl-transfer occurs, and in all rounds of extension the ketoreductase and dehydratase are active. The enoyl reductase and C-MeT of clz2 are not active in the final round of extension. The acetyltransferase clz6 appears to have a broad substrate selectivity for its acyl CoA substrate, allowing the in vitro synthesis of novel squalestatins. The biosynthesis of SQS1 requires several oxidative steps likely performed by oxidoreductases clz3, clz15 and clz16. Finally, in support of the identification of the cluster as being responsible for SQS1 production, the cluster contains a gene encoding a putative squalene synthase (SS) clz20, suggesting a likely mechanism for self-resistance. The sequence is that of Probable hydrolase clz13 from Cochliobolus lunatus (Filamentous fungus).